The primary structure comprises 231 residues: MSHEYDTVAPPNAKRMKTDNQLEDKKILYVVLEGCSLETAKVGGEYAILSSDKHANFLRKQKKDPADYRPDILHQCLLNLLDSPLNRAGKLRVFFRTSKNVLVDVSPQCRIPRTFDRFCGLMVQLLHKLSIRAAETTQKLMSVVKNPVSNHLPVGSRKMLMSFNVPELTMANKLVAPETDEPLVLIIGGIARGKIVVDYNDSETKISNYPLSAALTCAKVTSGLEEIWGII.

S-adenosyl-L-methionine-binding positions include Met161, Gly188, Gly193, and 206 to 211 (ISNYPL).

It belongs to the class IV-like SAM-binding methyltransferase superfamily. RNA methyltransferase NEP1 family. Homodimer.

It is found in the nucleus. The protein resides in the nucleolus. The enzyme catalyses a pseudouridine in rRNA + S-adenosyl-L-methionine = an N(1)-methylpseudouridine in rRNA + S-adenosyl-L-homocysteine + H(+). Functionally, S-adenosyl-L-methionine-dependent pseudouridine N(1)-methyltransferase that methylates a pseudouridine in 18S rRNA. Involved the biosynthesis of the hypermodified N1-methyl-N3-(3-amino-3-carboxypropyl) pseudouridine (m1acp3-Psi) conserved in eukaryotic 18S rRNA. Also has an essential role in 40S ribosomal subunit biogenesis independent on its methyltransferase activity, facilitating the incorporation of ribosomal protein S19 during the formation of pre-ribosomes. In Caenorhabditis elegans, this protein is Ribosomal RNA small subunit methyltransferase nep-1.